Consider the following 206-residue polypeptide: Proteasome subunit beta 1 (206 aa).

Positions 1-14 (MSRIHNDPKVLLTG) are cleaved as a propeptide — removed in mature form; by autocatalysis. Thr-15 acts as the Nucleophile in catalysis.

This sequence belongs to the peptidase T1B family. The 20S proteasome core is composed of 14 alpha and 14 beta subunits that assemble into four stacked heptameric rings, resulting in a barrel-shaped structure. The two inner rings, each composed of seven catalytic beta subunits, are sandwiched by two outer rings, each composed of seven alpha subunits. The catalytic chamber with the active sites is on the inside of the barrel. Has a gated structure, the ends of the cylinder being occluded by the N-termini of the alpha-subunits. Is capped at one or both ends by the proteasome regulatory ATPase, PAN.

Its subcellular location is the cytoplasm. The catalysed reaction is Cleavage of peptide bonds with very broad specificity.. The formation of the proteasomal ATPase PAN-20S proteasome complex, via the docking of the C-termini of PAN into the intersubunit pockets in the alpha-rings, triggers opening of the gate for substrate entry. Interconversion between the open-gate and close-gate conformations leads to a dynamic regulation of the 20S proteasome proteolysis activity. Component of the proteasome core, a large protease complex with broad specificity involved in protein degradation. This chain is Proteasome subunit beta 1, found in Caldivirga maquilingensis (strain ATCC 700844 / DSM 13496 / JCM 10307 / IC-167).